Reading from the N-terminus, the 1874-residue chain is Protein TIC 214 (1874 aa).

The next 6 helical transmembrane spans lie at 18-38, 64-84, 87-107, 124-144, 172-192, and 221-241; these read IINS…FSIG, FITG…HLAL, PHTI…WNNH, LSIQ…YFIL, VGWL…LVWI, and IFSI…PSPI. Disordered regions lie at residues 248–310 and 1567–1624; these read ETSK…EIRV and KTEC…NEED. The span at 255–268 shows a compositional bias: acidic residues; the sequence is GVESEEEGDVEIET. Basic and acidic residues-rich tracts occupy residues 298 to 310 and 1584 to 1601; these read DSNK…EIRV and NQKE…RSDA.

Belongs to the TIC214 family. In terms of assembly, part of the Tic complex.

The protein resides in the plastid. It is found in the chloroplast inner membrane. Involved in protein precursor import into chloroplasts. May be part of an intermediate translocation complex acting as a protein-conducting channel at the inner envelope. This is Protein TIC 214 from Coffea arabica (Arabian coffee).